The primary structure comprises 103 residues: MYAIIRDRGMQYRVEPGQVLTIDLISAEPGSQIELGEVLLVGDAEQVKVGSPLVEGAVVRAEVLGEQKGDKIVVFRYRNKTRYRRRTGHRQRYTKIRISEIVA.

This sequence belongs to the bacterial ribosomal protein bL21 family. As to quaternary structure, part of the 50S ribosomal subunit. Contacts protein L20.

Functionally, this protein binds to 23S rRNA in the presence of protein L20. The polypeptide is Large ribosomal subunit protein bL21 (Chloroflexus aurantiacus (strain ATCC 29364 / DSM 637 / Y-400-fl)).